We begin with the raw amino-acid sequence, 786 residues long: Progesterone receptor (786 aa).

Residues 1-10 (MTEVKSKETR) show a composition bias toward basic and acidic residues. 3 disordered regions span residues 1-95 (MTEV…SKDC), 110-212 (AAPW…ASPA), and 252-279 (SAFG…DGKE). Residues 1–420 (MTEVKSKETR…YSFESLPQKI (420 aa)) form a modulating, Pro-Rich region. Residue lysine 7 forms a Glycyl lysine isopeptide (Lys-Gly) (interchain with G-Cter in SUMO) linkage. Over residues 48-79 (DEEEEEEENEEEEEEEEPQQREEEEEEEEEDR) the composition is skewed to acidic residues. Residues 143–154 (APGPSQPRPGAP) show a composition bias toward pro residues. Residues 186 to 197 (AEERGFPERDAG) are compositionally biased toward basic and acidic residues. The segment covering 203–212 (LAPAAAASPA) has biased composition (low complexity). Phosphoserine occurs at positions 210 and 259. A Glycyl lysine isopeptide (Lys-Gly) (interchain with G-Cter in SUMO); alternate cross-link involves residue lysine 294. A Glycyl lysine isopeptide (Lys-Gly) (interchain with G-Cter in ubiquitin); alternate cross-link involves residue lysine 294. Lysine 385 participates in a covalent cross-link: Glycyl lysine isopeptide (Lys-Gly) (interchain with G-Cter in SUMO). 2 NR C4-type zinc fingers span residues 421-441 (CLIC…CGSC) and 457-481 (CAGR…LRKC). The segment at residues 421 to 486 (CLICGDEASG…RLRKCCQAGM (66 aa)) is a DNA-binding region (nuclear receptor). Serine 529 carries the post-translational modification Phosphoserine. Residues 532 to 766 (QEIPFVPPMI…EFPEMMSEVI (235 aa)) enclose the NR LBD domain.

It belongs to the nuclear hormone receptor family. NR3 subfamily. In terms of processing, phosphorylation of Ser-529 is sharply increased upon progesterone treatment, whereas phosphorylation of Ser-210 and Ser-259 is modestly induced by progesterone. Post-translationally, ubiquitinated. Ubiquitination is increased by progesterone and represses sumoylation at the same site. Sumoylation is hormone-dependent and represses transcriptional activity. Sumoylation on all three sites is enhanced by PIAS3. Desumoylated by SENP1. Sumoylation on Lys-385, the main site of sumoylation, is repressed by ubiquitination on the same site. As to expression, oviduct and bursa of Fabricius.

The protein localises to the nucleus. Its subcellular location is the cytoplasm. Functionally, the steroid hormones and their receptors are involved in the regulation of eukaryotic gene expression and affect cellular proliferation and differentiation in target tissues. This is Progesterone receptor (PGR) from Gallus gallus (Chicken).